The sequence spans 455 residues: Probable glycine dehydrogenase (decarboxylating) subunit 1 (455 aa).

It belongs to the GcvP family. N-terminal subunit subfamily. In terms of assembly, the glycine cleavage system is composed of four proteins: P, T, L and H. In this organism, the P 'protein' is a heterodimer of two subunits.

The catalysed reaction is N(6)-[(R)-lipoyl]-L-lysyl-[glycine-cleavage complex H protein] + glycine + H(+) = N(6)-[(R)-S(8)-aminomethyldihydrolipoyl]-L-lysyl-[glycine-cleavage complex H protein] + CO2. In terms of biological role, the glycine cleavage system catalyzes the degradation of glycine. The P protein binds the alpha-amino group of glycine through its pyridoxal phosphate cofactor; CO(2) is released and the remaining methylamine moiety is then transferred to the lipoamide cofactor of the H protein. The sequence is that of Probable glycine dehydrogenase (decarboxylating) subunit 1 from Francisella tularensis subsp. holarctica (strain FTNF002-00 / FTA).